Here is a 1192-residue protein sequence, read N- to C-terminus: DNA topoisomerase 2 (1192 aa).

ATP is bound by residues asparagine 64, asparagine 95, and 142-149 (GTNGVGLK). Mg(2+) is bound by residues glutamate 438, aspartate 539, and aspartate 541. One can recognise a Topo IIA-type catalytic domain in the interval 707 to 1174 (IPNFLDGMTR…PGASVWLEEI (468 aa)). Tyrosine 800 acts as the O-(5'-phospho-DNA)-tyrosine intermediate in catalysis.

Belongs to the type II topoisomerase family. Mg(2+) is required as a cofactor. It depends on Mn(2+) as a cofactor. Requires Ca(2+) as cofactor.

The protein resides in the host cytoplasm. The catalysed reaction is ATP-dependent breakage, passage and rejoining of double-stranded DNA.. In terms of biological role, type II topoisomerase. Processively relaxes supercoiled DNA. Displays DNA-supercoiling activity only when associated with the viral histone-like protein. The polypeptide is DNA topoisomerase 2 (Ornithodoros (relapsing fever ticks)).